Here is a 951-residue protein sequence, read N- to C-terminus: Pheromone-regulated membrane protein 10 (951 aa).

3 stretches are compositionally biased toward polar residues: residues 1–10 (MSSSYGNNGD), 68–84 (GGST…NVGS), and 92–104 (RTAS…NRRQ). Disordered regions lie at residues 1–293 (MSSS…EDPI), 313–366 (AGKS…TMVS), and 433–487 (NDSS…LPNF). Residues 126–135 (DDDDEEEEEH) show a composition bias toward acidic residues. Positions 219-234 (PHQETNDGRNSAESHS) are enriched in basic and acidic residues. Polar residues-rich tracts occupy residues 318 to 332 (PGTQ…SSEH), 354 to 366 (PFNQ…TMVS), and 468 to 484 (SQTN…SMNL). The next 10 helical transmembrane spans lie at 635–655 (WVSV…AFGG), 657–677 (WINM…QFIV), 687–707 (VFEV…GSIP), 711–731 (ICFG…YIIL), 753–773 (IIYS…FGWI), 786–806 (NISP…LGLI), 811–831 (WTQL…TYFS), 841–861 (FTSA…SRIW), 863–883 (GFAV…GVAS), and 918–938 (VTMI…TLFI).

This sequence belongs to the ThrE exporter (TC 2.A.79) family.

It is found in the membrane. In Kluyveromyces lactis (strain ATCC 8585 / CBS 2359 / DSM 70799 / NBRC 1267 / NRRL Y-1140 / WM37) (Yeast), this protein is Pheromone-regulated membrane protein 10.